Consider the following 121-residue polypeptide: Large ribosomal subunit protein uL18 (121 aa).

It belongs to the universal ribosomal protein uL18 family. In terms of assembly, part of the 50S ribosomal subunit; part of the 5S rRNA/L5/L18/L25 subcomplex. Contacts the 5S and 23S rRNAs.

Functionally, this is one of the proteins that bind and probably mediate the attachment of the 5S RNA into the large ribosomal subunit, where it forms part of the central protuberance. This chain is Large ribosomal subunit protein uL18, found in Caldanaerobacter subterraneus subsp. tengcongensis (strain DSM 15242 / JCM 11007 / NBRC 100824 / MB4) (Thermoanaerobacter tengcongensis).